The primary structure comprises 311 residues: R2-like ligand binding oxidase (311 aa).

The Mn(2+) site is built by Glu-68, Glu-101, and His-104. Residues 71-162 (VTQDIQPFMA…AAQVRASVTY (92 aa)) constitute a cross-link (3-(O4'-tyrosyl)-valine (Val-Tyr)). Glu-101 serves as a coordination point for Fe cation. Positions 167, 202, and 205 each coordinate Fe cation.

This sequence belongs to the ribonucleoside diphosphate reductase small chain family. R2-like ligand binding oxidase subfamily. As to quaternary structure, homodimer. Requires Fe cation as cofactor. Mn(2+) is required as a cofactor.

Functionally, probable oxidase that might be involved in lipid metabolism. The protein is R2-like ligand binding oxidase of Mycobacterium avium (strain 104).